We begin with the raw amino-acid sequence, 243 residues long: Orotidine 5'-phosphate decarboxylase (243 aa).

Substrate-binding positions include D18, K39, 66–75 (DLKFHDIPAT), T130, R192, Q201, G221, and R222. The Proton donor role is filled by K68.

This sequence belongs to the OMP decarboxylase family. Type 1 subfamily. Homodimer.

It carries out the reaction orotidine 5'-phosphate + H(+) = UMP + CO2. Its pathway is pyrimidine metabolism; UMP biosynthesis via de novo pathway; UMP from orotate: step 2/2. Catalyzes the decarboxylation of orotidine 5'-monophosphate (OMP) to uridine 5'-monophosphate (UMP). This Synechococcus sp. (strain CC9902) protein is Orotidine 5'-phosphate decarboxylase.